The sequence spans 490 residues: Glutamyl-tRNA(Gln) amidotransferase subunit A (490 aa).

Residues Lys-76 and Ser-151 each act as charge relay system in the active site. Ser-175 functions as the Acyl-ester intermediate in the catalytic mechanism.

This sequence belongs to the amidase family. GatA subfamily. In terms of assembly, heterotrimer of A, B and C subunits.

The catalysed reaction is L-glutamyl-tRNA(Gln) + L-glutamine + ATP + H2O = L-glutaminyl-tRNA(Gln) + L-glutamate + ADP + phosphate + H(+). In terms of biological role, allows the formation of correctly charged Gln-tRNA(Gln) through the transamidation of misacylated Glu-tRNA(Gln) in organisms which lack glutaminyl-tRNA synthetase. The reaction takes place in the presence of glutamine and ATP through an activated gamma-phospho-Glu-tRNA(Gln). The chain is Glutamyl-tRNA(Gln) amidotransferase subunit A from Aromatoleum aromaticum (strain DSM 19018 / LMG 30748 / EbN1) (Azoarcus sp. (strain EbN1)).